Here is a 197-residue protein sequence, read N- to C-terminus: Peptidyl-tRNA hydrolase (197 aa).

Residue Y23 participates in tRNA binding. Residue H28 is the Proton acceptor of the active site. 3 residues coordinate tRNA: F73, N75, and N121.

The protein belongs to the PTH family. Monomer.

It is found in the cytoplasm. It carries out the reaction an N-acyl-L-alpha-aminoacyl-tRNA + H2O = an N-acyl-L-amino acid + a tRNA + H(+). Its function is as follows. Hydrolyzes ribosome-free peptidyl-tRNAs (with 1 or more amino acids incorporated), which drop off the ribosome during protein synthesis, or as a result of ribosome stalling. Functionally, catalyzes the release of premature peptidyl moieties from peptidyl-tRNA molecules trapped in stalled 50S ribosomal subunits, and thus maintains levels of free tRNAs and 50S ribosomes. The chain is Peptidyl-tRNA hydrolase from Frankia alni (strain DSM 45986 / CECT 9034 / ACN14a).